We begin with the raw amino-acid sequence, 1230 residues long: ABC transporter B family member 5 (1230 aa).

Helical transmembrane passes span 27-47 (VLLMIVGSIGAIANGVCSPLM), 78-98 (LVYLGLGALGAAFLQVACWMI), 154-174 (FIQLISTFVGGFVIAFLRGWL), 177-197 (LVMLTSIPLLAMSGAAIAIIV), 253-273 (GFVTGLGLGVMFLVFFSTYAL), and 286-306 (GYTGGAVINVMVTVVSSSIAL). The region spanning 30–318 (MIVGSIGAIA…ASPCLTAFTA (289 aa)) is the ABC transmembrane type-1 1 domain. The region spanning 353–589 (IELRDVCFSY…HEGAYSQLLR (237 aa)) is the ABC transporter 1 domain. Residue 388–395 (GESGSGKS) participates in ATP binding. Asparagine 540, asparagine 615, and asparagine 616 each carry an N-linked (GlcNAc...) asparagine glycan. The segment at 602-621 (ISDGSISSGSSRGNNSTRQD) is disordered. A compositionally biased stretch (low complexity) spans 603-617 (SDGSISSGSSRGNNS). A run of 2 helical transmembrane segments spans residues 662–682 (ILILGTLVGAVNGTIFPIFGI) and 707–727 (MIFVLLGVAAVIVYPTTNYLF). The ABC transmembrane type-1 2 domain maps to 663–950 (LILGTLVGAV…ASSFAPDSSK (288 aa)). N-linked (GlcNAc...) asparagine glycosylation occurs at asparagine 759. Transmembrane regions (helical) follow at residues 798–818 (IIAFTASWEVAIIILVIIPFI), 889–909 (GVGFGISFFVLYSVYASCFYV), and 924–944 (VFQVFLALTLTAVGISQASSF). An ABC transporter 2 domain is found at 985-1223 (IELCHISFTY…EGGVYASLVQ (239 aa)). 1020 to 1027 (GESGSGKS) contributes to the ATP binding site. Asparagine 1074, asparagine 1174, and asparagine 1227 each carry an N-linked (GlcNAc...) asparagine glycan.

This sequence belongs to the ABC transporter superfamily. ABCB family. Multidrug resistance exporter (TC 3.A.1.201) subfamily.

The protein resides in the membrane. This chain is ABC transporter B family member 5 (ABCB5), found in Arabidopsis thaliana (Mouse-ear cress).